The following is a 177-amino-acid chain: ATP synthase subunit delta (177 aa).

The protein belongs to the ATPase delta chain family. F-type ATPases have 2 components, F(1) - the catalytic core - and F(0) - the membrane proton channel. F(1) has five subunits: alpha(3), beta(3), gamma(1), delta(1), epsilon(1). F(0) has three main subunits: a(1), b(2) and c(10-14). The alpha and beta chains form an alternating ring which encloses part of the gamma chain. F(1) is attached to F(0) by a central stalk formed by the gamma and epsilon chains, while a peripheral stalk is formed by the delta and b chains.

The protein resides in the cell inner membrane. Functionally, f(1)F(0) ATP synthase produces ATP from ADP in the presence of a proton or sodium gradient. F-type ATPases consist of two structural domains, F(1) containing the extramembraneous catalytic core and F(0) containing the membrane proton channel, linked together by a central stalk and a peripheral stalk. During catalysis, ATP synthesis in the catalytic domain of F(1) is coupled via a rotary mechanism of the central stalk subunits to proton translocation. Its function is as follows. This protein is part of the stalk that links CF(0) to CF(1). It either transmits conformational changes from CF(0) to CF(1) or is implicated in proton conduction. The chain is ATP synthase subunit delta from Flavobacterium psychrophilum (strain ATCC 49511 / DSM 21280 / CIP 103535 / JIP02/86).